The chain runs to 247 residues: tRNA (guanine-N(1)-)-methyltransferase (247 aa).

S-adenosyl-L-methionine is bound by residues Gly-117 and 136–141 (LGDFVL).

Belongs to the RNA methyltransferase TrmD family. Homodimer.

Its subcellular location is the cytoplasm. It carries out the reaction guanosine(37) in tRNA + S-adenosyl-L-methionine = N(1)-methylguanosine(37) in tRNA + S-adenosyl-L-homocysteine + H(+). Functionally, specifically methylates guanosine-37 in various tRNAs. The sequence is that of tRNA (guanine-N(1)-)-methyltransferase from Myxococcus xanthus (strain DK1622).